The following is a 320-amino-acid chain: Cytochrome f (320 aa).

The first 36 residues, 1–36 (MKLNSLINLIQKSIYSCTLLLTILNIICIAPNSSNA), serve as a signal peptide directing secretion. Heme-binding residues include phenylalanine 37, cysteine 57, cysteine 60, and histidine 61. The helical transmembrane segment at 286–305 (IKGMIAFFFVSVLAQIFFVL) threads the bilayer.

This sequence belongs to the cytochrome f family. In terms of assembly, the 4 large subunits of the cytochrome b6-f complex are cytochrome b6, subunit IV (17 kDa polypeptide, petD), cytochrome f and the Rieske protein, while the 4 small subunits are PetG, PetL, PetM and PetN. The complex functions as a dimer. Requires heme as cofactor.

Its subcellular location is the plastid. The protein resides in the chloroplast thylakoid membrane. Component of the cytochrome b6-f complex, which mediates electron transfer between photosystem II (PSII) and photosystem I (PSI), cyclic electron flow around PSI, and state transitions. This Porphyra purpurea (Red seaweed) protein is Cytochrome f (petA).